We begin with the raw amino-acid sequence, 412 residues long: Putative gustatory receptor 58c (412 aa).

Transmembrane regions (helical) follow at residues 39 to 59 (VVYC…ALFV) and 72 to 92 (MFGV…LFLM). Residue Asn158 is glycosylated (N-linked (GlcNAc...) asparagine). A helical transmembrane segment spans residues 173–193 (IVYALIMILLMSYVDMTVYMV). A glycan (N-linked (GlcNAc...) asparagine) is linked at Asn203. The next 3 helical transmembrane spans lie at 224–241 (IPRE…RKLW), 262–282 (VLFN…RLWI), and 296–316 (ILYA…FSIF). 3 N-linked (GlcNAc...) asparagine glycosylation sites follow: Asn337, Asn386, and Asn391.

This sequence belongs to the insect chemoreceptor superfamily. Gustatory receptor (GR) family. Gr10a subfamily.

The protein resides in the cell membrane. Functionally, probable gustatory receptor which mediates acceptance or avoidance behavior, depending on its substrates. This Drosophila melanogaster (Fruit fly) protein is Putative gustatory receptor 58c (Gr58c).